We begin with the raw amino-acid sequence, 317 residues long: Melanocyte-stimulating hormone receptor (317 aa).

Residues 1–37 (MPVLGSQRRLLGSLNCTPPATFPLTLAPNRTGPQCLE) are Extracellular-facing. N-linked (GlcNAc...) asparagine glycosylation is present at N29. Residues 38–63 (VAIPDGLFLSLGLVSLVENVLVVAAI) traverse the membrane as a helical segment. Residues 64–72 (AKNRNLQSP) lie on the Cytoplasmic side of the membrane. The chain crosses the membrane as a helical span at residues 73–93 (MYYFICCLAMSDLLVSVSNVL). Residues 94-118 (ETAVMLLLEAGALAARAAVVQQLDN) are Extracellular-facing. A helical membrane pass occupies residues 119–140 (VIDVLICGSMVSSLCFLGAIAV). The Cytoplasmic segment spans residues 141 to 163 (DRYISIFYALRYHSVVTLPRAWR). A helical membrane pass occupies residues 164-183 (IIAAIWVASILTSLLFITYY). Over 184 to 191 (NHTVVLLC) the chain is Extracellular. A helical transmembrane segment spans residues 192-211 (LVGFFIAMLALMAVLYVHML). The Cytoplasmic portion of the chain corresponds to 212-240 (ARACQHARGIARLQKRQRPIHQGFGLKGA). The chain crosses the membrane as a helical span at residues 241–266 (ATLTILLGVFFLCWGPFFLHLSLIVL). The Extracellular portion of the chain corresponds to 267 to 279 (CPQHPTCGCIFKN). The chain crosses the membrane as a helical span at residues 280–300 (FNLFLALIICNAIVDPLIYAF). Topologically, residues 301 to 317 (RSQELRKTLQEVLQCSW) are cytoplasmic. The S-palmitoyl cysteine moiety is linked to residue C315.

Belongs to the G-protein coupled receptor 1 family. Interacts with MGRN1, but does not undergo MGRN1-mediated ubiquitination; this interaction competes with GNAS-binding and thus inhibits agonist-induced cAMP production. Interacts with OPN3; the interaction results in a decrease in MC1R-mediated cAMP signaling and ultimately a decrease in melanin production in melanocytes.

It is found in the cell membrane. Receptor for MSH (alpha, beta and gamma) and ACTH. The activity of this receptor is mediated by G proteins which activate adenylate cyclase. Mediates melanogenesis, the production of eumelanin (black/brown) and phaeomelanin (red/yellow), via regulation of cAMP signaling in melanocytes. In Cervus elaphus (Red deer), this protein is Melanocyte-stimulating hormone receptor (MC1R).